Here is a 1146-residue protein sequence, read N- to C-terminus: MIKAIFDTLCPNCGGEISAERLLKGLPCEKCLPEEVNREEVCQKLENGSFKEFCELLSELKDWEDFFKEILGTSPWSLQKSWARKVFLGRSFAMLAPTGVGKTTFGLSMASYLAKQGKKSYIILPTQLLVEQVSERIKTFGVDEDRLIVWGKLSEKKKKELKERIQKGDFDILITTSMFLYKNYEILPKDFSFIFVDDVDSFLKTAKNVDKVLYLLGFSEEDIHKAFELIRLKEKPNKSEEDWEEIKKRSEELREIAKKKKGVLAVSSATGNPRSNRIKLFRELLGFEVGKPSVLLRNIVETYEETQNLKETLLKRVKEFGKGGLVFVSSDYGREAVEEVKKFLESHGVKAVTYEEDLKLFEKGEAQVAIGISSFKNPLARGIDLPHVVRYAIFYGVPKIRVPLKVETSVSHLLWALLSLRPIILKDEKLKSEVKKVDTWIQRLRRYSFLSDDFVEERPDLKDRIENLRKEVQEFLLREDIVEKIKNSEELTLRLGEEGFELVVADVTGYLQASGRTSRMYAGGLTKGLSHVLVDDRRAFKNLEKKVRWFNQDINFKKIEEVDLKEVLREIDEDRKKVREILEGKVKAEQKEHVKPVLVVVESPNKARTIANFFGKPMGRKIGGIDVLEVMVGDLYIMITASLGHVFDLVKDKEFHGVIAKNGEYVPIYEVIEGKENIVKGLRELAQEVDTVLIGTDPDTEGEKIGWDLGALLSPYIPNVERIEFHEVTRKAIKHAVENPRDFNENLVKAQLVRRIADRWVGFEVSRIVQQAFDKHWLSGGRVQIPVLGWIIEREKLYRKKKHVVQITFKENGRWLRLGFEFQDKKEAKEFYENLKEIDVEVLEEREELKNPPPPFTTDTMLKEASDRYRISVPKLMQLAQELFEYGLITYHRTDSTRVSDVGIGVAKEWISEELGKELFYPRVWGEGGAHECIRPTKPLDVEDLRSMMLAGQLQNLTREHLLLYELIFKRFMASQMKPVKVKTKKVKVKALGREQELILTTEILEEGFNKVYPLELQPDLKGSVYVEDKKELKSVPMAYLYTQGSLVEEMKRRGIGRPSTYATIVSKLLERGYVIERHGFLIPTKLGKQVYEFLKSREKIMPFVSEEFTRKLEELMDKVEEGKEDYLQVLDELYKKVNEFEKANV.

An RG N-terminal-type zinc finger spans residues 1–38 (MIKAIFDTLCPNCGGEISAERLLKGLPCEKCLPEEVNR). C10, C13, C28, and C31 together coordinate Zn(2+). ATP-binding positions include Q79 and 96 to 103 (APTGVGKT). The region spanning 83–240 (ARKVFLGRSF…RLKEKPNKSE (158 aa)) is the Helicase ATP-binding domain. A DEAD box motif is present at residues 197 to 200 (DDVD). Residues 412–565 (HLLWALLSLR…FKKIEEVDLK (154 aa)) enclose the Helicase C-terminal domain. The segment at 592–1146 (EHVKPVLVVV…KVNEFEKANV (555 aa)) is topoisomerase I. In terms of domain architecture, Toprim spans 596-728 (PVLVVVESPN…NVERIEFHEV (133 aa)). Mg(2+)-binding residues include E602 and D697. A Topo IA-type catalytic domain is found at 744–1142 (NENLVKAQLV…ELYKKVNEFE (399 aa)). The active-site O-(5'-phospho-DNA)-tyrosine intermediate is the Y891.

It in the N-terminal section; belongs to the DEAD box helicase family. DDVD subfamily. In the C-terminal section; belongs to the type IA topoisomerase family. In terms of assembly, monomer. The cofactor is Zn(2+). Mg(2+) serves as cofactor.

The protein resides in the cytoplasm. The enzyme catalyses ATP + H2O = ADP + phosphate + H(+). Its function is as follows. Modifies the topological state of DNA by introducing positive supercoils in an ATP-dependent process, increasing the linking number in steps of +1. Binds to single-stranded DNA, transiently cleaves and then rejoins the ends, introducing a positive supercoil in the process. The scissile phosphodiester is attacked by the catalytic tyrosine of the enzyme, resulting in the formation of a DNA-(5'-phosphotyrosyl)-enzyme intermediate. Probably involved in rewinding DNA strands in regions of the chromosome that have opened up to allow replication, transcription, DNA repair and/or for DNA protection. The sequence is that of Reverse gyrase 1 from Aquifex aeolicus (strain VF5).